The following is a 243-amino-acid chain: SDDLSFKFKNFSQNGKDLSFQGDASVIETGVLQLNKVGNNLPDETGGIARYIAPIHIWNCNTGEVASFITSFSFFMETSANPKAATDGLTFFLAPPDSPLRRAGGYFGLFEDTKDNDSSYQTVAVEFDTIGSPVNFDDPGFPHIGIDVNRVKSINAERWNKRYGLNNVANVEIIYEASSKTLTASLTYPSDQTSISVTSIVDLKEILPEWVSVGFSGGTYIGRQATHEVLNWYFTSNLINTNS.

A glycan (N-linked (GlcNAc...) asparagine; partial) is linked at Asn10. An N-linked (GlcNAc...) asparagine glycan is attached at Asn116. 2 residues coordinate Mn(2+): Glu126 and Asp128. Asp128, Asn135, and Asp138 together coordinate Ca(2+). Mn(2+) is bound by residues Asp138 and His143.

The protein belongs to the leguminous lectin family.

In terms of biological role, L-fucose specific lectin. This Ulex europaeus (Furze) protein is Anti-H(O) lectin 1.